Reading from the N-terminus, the 209-residue chain is Probable glutathione peroxidase 8-B (209 aa).

A helical transmembrane segment spans residues 18–40; it reads VFLVFFSMVLCTGILCVLQLKFL. C79 is an active-site residue.

It belongs to the glutathione peroxidase family.

The protein localises to the membrane. The enzyme catalyses 2 glutathione + H2O2 = glutathione disulfide + 2 H2O. This chain is Probable glutathione peroxidase 8-B (gpx8-b), found in Xenopus laevis (African clawed frog).